Reading from the N-terminus, the 111-residue chain is MIWLTLVFASLLSVAGQLCQKQATCFVAINKRRKHIVLWLGLALACIGLAMMLWLLVLQNVPVGIAYPMLSLNFVWVTLAAVKLWHEPVSPRHWCGVAFIIGGIVILGSTV.

The next 3 helical transmembrane spans lie at 36 to 56 (IVLWLGLALACIGLAMMLWLL), 61 to 81 (VPVGIAYPMLSLNFVWVTLAA), and 88 to 108 (PVSPRHWCGVAFIIGGIVILG). The 70-residue stretch at 40–109 (LGLALACIGL…IIGGIVILGS (70 aa)) folds into the EamA domain.

This sequence belongs to the ArnE family. Heterodimer of ArnE and ArnF.

The protein localises to the cell inner membrane. The protein operates within bacterial outer membrane biogenesis; lipopolysaccharide biosynthesis. Functionally, translocates 4-amino-4-deoxy-L-arabinose-phosphoundecaprenol (alpha-L-Ara4N-phosphoundecaprenol) from the cytoplasmic to the periplasmic side of the inner membrane. The chain is Probable 4-amino-4-deoxy-L-arabinose-phosphoundecaprenol flippase subunit ArnE from Shigella flexneri serotype 5b (strain 8401).